Here is a 714-residue protein sequence, read N- to C-terminus: Zinc finger matrin-type protein 1 (714 aa).

The Matrin-type 1 zinc finger occupies 89–119 (NFCKPCGVVLQHESERISHFESEIHAQNVKF). A disordered region spans residues 172–214 (HYVGKSHSPTQNQSLEEHDQVSPSTCSPKMDEPNTTPAPPPFL). The Matrin-type 2 zinc finger occupies 230–254 (YVCHICSITFTSLHMFRSHMQGTEH). Residues 417-434 (RERVDSEHRQRPCEERFS) show a composition bias toward basic and acidic residues. 2 disordered regions span residues 417 to 469 (RERV…NDDF) and 571 to 714 (MPAS…ILGF). Polar residues-rich tracts occupy residues 437-446 (APQTYQQEYS) and 575-588 (LSLS…SSYN). Residues 609 to 619 (SHRRRRQKRKR) show a composition bias toward basic residues. Basic and acidic residues-rich tracts occupy residues 620–632 (HLEE…EKEQ) and 640–662 (SYQD…EDKA). Positions 669 to 678 (TKHRRKKRKH) are enriched in basic residues.

The protein localises to the nucleus. The polypeptide is Zinc finger matrin-type protein 1 (Zmat1) (Mus musculus (Mouse)).